Reading from the N-terminus, the 132-residue chain is uncharacterized protein (132 aa).

To M.jannaschii MJ0661.

This is an uncharacterized protein from Helicobacter pylori (strain J99 / ATCC 700824) (Campylobacter pylori J99).